A 37-amino-acid polypeptide reads, in one-letter code: Mu-agatoxin-Aa1f (37 aa).

4 disulfides stabilise this stretch: Cys-2–Cys-18, Cys-9–Cys-23, Cys-17–Cys-33, and Cys-25–Cys-31. Asn-37 is modified (asparagine amide).

It belongs to the neurotoxin 07 (Beta/delta-agtx) family. 03 (aga-4) subfamily. Aga sub-subfamily. Expressed by the venom gland.

The protein resides in the secreted. Its function is as follows. Insecticidal neurotoxin that induces an irreversible spastic paralysis when injected into insects. Modifies presynaptic voltage-gated sodium channels (Nav), causing them to open at the normal resting potential of the nerve. This leads to spontaneous release of neurotransmitter and repetitive action potentials in motor neurons. In Agelenopsis aperta (North American funnel-web spider), this protein is Mu-agatoxin-Aa1f.